An 800-amino-acid polypeptide reads, in one-letter code: Signaling protein YkoW (800 aa).

The next 7 membrane-spanning stretches (helical) occupy residues 5 to 27 (VTYN…YISL), 44 to 66 (WLIG…GMMA), 76 to 98 (EFMP…LYFV), 103 to 125 (LTYY…MHYI), 135 to 157 (IIYE…FVSL), 178 to 200 (VSSI…AATF), and 215 to 237 (TFHW…LFSS). The MHYT domain maps to 7–201 (YNTTLICLSI…YTGMLAATFH (195 aa)). The region spanning 255-319 (QRFQSLIVHN…FEQVKKDKQA (65 aa)) is the PAS domain. The region spanning 402-536 (YNTVVFFLDL…NKSKYRYYSF (135 aa)) is the GGDEF domain. An EAL domain is found at 545-798 (KLNQEMVLRE…QFEQFIIEQP (254 aa)).

It localises to the cell membrane. Functionally, probable signaling protein whose physiological role is not yet known. The sequence is that of Signaling protein YkoW (ykoW) from Bacillus subtilis (strain 168).